The sequence spans 494 residues: Endoglucanase 1 (494 aa).

An N-terminal signal peptide occupies residues 1–25 (MDCSSPLSLFHLLLVCTVMVKCCSA). Residue aspartate 82 is the Nucleophile of the active site. Asparagine 254 and asparagine 359 each carry an N-linked (GlcNAc...) asparagine glycan. Catalysis depends on residues histidine 411, aspartate 462, and glutamate 471.

This sequence belongs to the glycosyl hydrolase 9 (cellulase E) family.

It carries out the reaction Endohydrolysis of (1-&gt;4)-beta-D-glucosidic linkages in cellulose, lichenin and cereal beta-D-glucans.. Involved in ripening fruit process. The sequence is that of Endoglucanase 1 (CEL1) from Persea americana (Avocado).